Consider the following 127-residue polypeptide: Small ribosomal subunit protein uS11 (127 aa).

The protein belongs to the universal ribosomal protein uS11 family. Part of the 30S ribosomal subunit. Interacts with proteins S7 and S18. Binds to IF-3.

Functionally, located on the platform of the 30S subunit, it bridges several disparate RNA helices of the 16S rRNA. Forms part of the Shine-Dalgarno cleft in the 70S ribosome. The protein is Small ribosomal subunit protein uS11 of Flavobacterium johnsoniae (strain ATCC 17061 / DSM 2064 / JCM 8514 / BCRC 14874 / CCUG 350202 / NBRC 14942 / NCIMB 11054 / UW101) (Cytophaga johnsonae).